The chain runs to 351 residues: MKKELRYGYTTGSCATAAAKAATYMLFNDEILKSIKIDLPIGKEIELDIFYIERKEGEVICGVRKDAGDDPDVTHNMIIYAKAEKSKEFLITGGEGIGVVTKKGLPLQVGDYAINPVPRKMIESEVKKVLPEGKNVKITIFAPEGKYIAKRTLNPKLGIIGGISILGTTGIVEPLSDEAYKKTIDLEISMASSESNEICLVFGNYGKNFTTLSSKMPLVTMGNYVGFALESACKHRIKKVYLVGQIGKMIKVAGGIFNTYSYIADARNEIFTAYLSLYGLDRGILEKVMSANTTEEILDLIEGKVGKDFFENLALRIKEKCTQYVKGCLEVEVEIFSLKKGHLAKTWSDFK.

It belongs to the CbiD family.

It carries out the reaction Co-precorrin-5B + S-adenosyl-L-methionine = Co-precorrin-6A + S-adenosyl-L-homocysteine. It participates in cofactor biosynthesis; adenosylcobalamin biosynthesis; cob(II)yrinate a,c-diamide from sirohydrochlorin (anaerobic route): step 6/10. Functionally, catalyzes the methylation of C-1 in cobalt-precorrin-5B to form cobalt-precorrin-6A. The chain is Cobalt-precorrin-5B C(1)-methyltransferase from Thermosipho africanus (strain TCF52B).